Here is an 85-residue protein sequence, read N- to C-terminus: Large ribosomal subunit protein bL27 (85 aa).

The interval 1–22 (MAKTKAGGSTRNGRDSKGRRLG) is disordered.

It belongs to the bacterial ribosomal protein bL27 family.

This is Large ribosomal subunit protein bL27 from Mycoplasmopsis pulmonis (strain UAB CTIP) (Mycoplasma pulmonis).